The chain runs to 691 residues: Protein simr-1 (691 aa).

One can recognise a Tudor; degenerate domain in the interval 139 to 204 (EAEITPGTIY…TLFHLGKFTI (66 aa)). 2 disordered regions span residues 547–573 (TGPCGSNTSRPTAQNTANSSINQDMSI) and 588–618 (DNLNDTENWPNSEREQSATEMESGAEATTNS). 2 stretches are compositionally biased toward polar residues: residues 549 to 573 (PCGSNTSRPTAQNTANSSINQDMSI) and 588 to 598 (DNLNDTENWPN).

It localises to the cytoplasm. The protein localises to the perinuclear region. In terms of biological role, acts downstream of piRNA production to promote mediator complex-dependent endogenous siRNA biogenesis from piRNA-target mRNAs in the RNA interference pathway in germ cells. Not required to identify target mRNA by the piRNA pathway. Plays a role in both spermatogenesis and oogenesis and in maintaining fertility over multiple generations, probably by directing mutator-dependent silencing to piRNA-targeted genes. The protein is Protein simr-1 of Caenorhabditis elegans.